A 274-amino-acid polypeptide reads, in one-letter code: Undecaprenyl-diphosphatase (274 aa).

The next 7 membrane-spanning stretches (helical) occupy residues 40 to 60 (PGAA…LMFF), 90 to 110 (WFII…KDVI), 114 to 134 (FRSL…LGVA), 147 to 167 (ISLR…IPGV), 190 to 210 (YAFL…LKDI), 221 to 241 (PTIV…AWLL), and 252 to 272 (FVLY…TGVI).

This sequence belongs to the UppP family.

The protein localises to the cell membrane. It carries out the reaction di-trans,octa-cis-undecaprenyl diphosphate + H2O = di-trans,octa-cis-undecaprenyl phosphate + phosphate + H(+). Catalyzes the dephosphorylation of undecaprenyl diphosphate (UPP). Confers resistance to bacitracin. In Nocardioides sp. (strain ATCC BAA-499 / JS614), this protein is Undecaprenyl-diphosphatase.